The chain runs to 433 residues: 23S rRNA (uracil(1939)-C(5))-methyltransferase RlmD (433 aa).

The TRAM domain occupies 10–68 (RTTTRQIITVSVNDLDSFGQGVARHNGKTLFIPGLLPQENAEVTVTEDKKQYARAKVVR). Positions 81, 87, 90, and 162 each coordinate [4Fe-4S] cluster. 6 residues coordinate S-adenosyl-L-methionine: Gln-265, Phe-294, Asn-299, Glu-315, Asn-342, and Asp-363. The active-site Nucleophile is the Cys-389.

It belongs to the class I-like SAM-binding methyltransferase superfamily. RNA M5U methyltransferase family. RlmD subfamily.

It catalyses the reaction uridine(1939) in 23S rRNA + S-adenosyl-L-methionine = 5-methyluridine(1939) in 23S rRNA + S-adenosyl-L-homocysteine + H(+). In terms of biological role, catalyzes the formation of 5-methyl-uridine at position 1939 (m5U1939) in 23S rRNA. The sequence is that of 23S rRNA (uracil(1939)-C(5))-methyltransferase RlmD from Escherichia coli O6:K15:H31 (strain 536 / UPEC).